We begin with the raw amino-acid sequence, 368 residues long: Methylthioribose-1-phosphate isomerase (368 aa).

Substrate-binding positions include 54 to 56 (RGA), Arg91, and Gln204. Asp245 (proton donor) is an active-site residue. Position 255–256 (255–256 (NK)) interacts with substrate.

This sequence belongs to the eIF-2B alpha/beta/delta subunits family. MtnA subfamily.

The catalysed reaction is 5-(methylsulfanyl)-alpha-D-ribose 1-phosphate = 5-(methylsulfanyl)-D-ribulose 1-phosphate. It participates in amino-acid biosynthesis; L-methionine biosynthesis via salvage pathway; L-methionine from S-methyl-5-thio-alpha-D-ribose 1-phosphate: step 1/6. Catalyzes the interconversion of methylthioribose-1-phosphate (MTR-1-P) into methylthioribulose-1-phosphate (MTRu-1-P). This Gluconobacter oxydans (strain 621H) (Gluconobacter suboxydans) protein is Methylthioribose-1-phosphate isomerase.